The sequence spans 86 residues: Large ribosomal subunit protein bL27 (86 aa).

A disordered region spans residues 1-24 (MAHKKGTGSTRNGRDSNSKRLGVK).

This sequence belongs to the bacterial ribosomal protein bL27 family.

The chain is Large ribosomal subunit protein bL27 from Prochlorococcus marinus (strain AS9601).